The primary structure comprises 727 residues: Anaphase-promoting complex subunit 5 (727 aa).

Position 180 is a phosphoserine (Ser180). TPR repeat units lie at residues 194-234 (QKQA…FNPD), 235-285 (FAEA…GRSL), 286-322 (RYAA…SNDH), 323-359 (VCLQ…FGLP), 360-390 (RAFA…SELI), 391-438 (DISI…TESF), 439-472 (AVAL…FPPN), 473-512 (SQHA…ALNG), 513-552 (IEGV…TEMV), 553-592 (ISVL…QYLA), 593-632 (SETV…ILDK), 633-668 (GRAM…NLTE), and 669-708 (AKNY…CAMV). Thr217 carries the phosphothreonine modification.

The protein belongs to the APC5 family. In terms of assembly, the mammalian APC/C is composed at least of 14 distinct subunits ANAPC1, ANAPC2, CDC27/APC3, ANAPC4, ANAPC5, CDC16/APC6, ANAPC7, CDC23/APC8, ANAPC10, ANAPC11, CDC26/APC12, ANAPC13, ANAPC15 and ANAPC16 that assemble into a complex of at least 19 chains with a combined molecular mass of around 1.2 MDa; APC/C interacts with FZR1 and FBXO5.

Its subcellular location is the nucleus. It localises to the cytoplasm. The protein localises to the cytoskeleton. It is found in the spindle. It functions in the pathway protein modification; protein ubiquitination. Component of the anaphase promoting complex/cyclosome (APC/C), a cell cycle-regulated E3 ubiquitin ligase that controls progression through mitosis and the G1 phase of the cell cycle. The APC/C complex acts by mediating ubiquitination and subsequent degradation of target proteins: it mainly mediates the formation of 'Lys-11'-linked polyubiquitin chains and, to a lower extent, the formation of 'Lys-48'- and 'Lys-63'-linked polyubiquitin chains. The APC/C complex catalyzes assembly of branched 'Lys-11'-/'Lys-48'-linked branched ubiquitin chains on target proteins. This Rattus norvegicus (Rat) protein is Anaphase-promoting complex subunit 5 (Anapc5).